Reading from the N-terminus, the 310-residue chain is tRNA pseudouridine synthase B (310 aa).

The Nucleophile role is filled by Asp49.

Belongs to the pseudouridine synthase TruB family. Type 1 subfamily.

The catalysed reaction is uridine(55) in tRNA = pseudouridine(55) in tRNA. Responsible for synthesis of pseudouridine from uracil-55 in the psi GC loop of transfer RNAs. The sequence is that of tRNA pseudouridine synthase B from Rhizobium etli (strain ATCC 51251 / DSM 11541 / JCM 21823 / NBRC 15573 / CFN 42).